The sequence spans 247 residues: Orotidine 5'-phosphate decarboxylase (247 aa).

Residues Asp-21, Lys-43, 70-79, Thr-129, Arg-190, Gln-199, Gly-219, and Arg-220 contribute to the substrate site; that span reads DMKFHDIPNT. Residue Lys-72 is the Proton donor of the active site.

It belongs to the OMP decarboxylase family. Type 1 subfamily. In terms of assembly, homodimer.

It carries out the reaction orotidine 5'-phosphate + H(+) = UMP + CO2. It participates in pyrimidine metabolism; UMP biosynthesis via de novo pathway; UMP from orotate: step 2/2. Functionally, catalyzes the decarboxylation of orotidine 5'-monophosphate (OMP) to uridine 5'-monophosphate (UMP). The protein is Orotidine 5'-phosphate decarboxylase of Chromobacterium violaceum (strain ATCC 12472 / DSM 30191 / JCM 1249 / CCUG 213 / NBRC 12614 / NCIMB 9131 / NCTC 9757 / MK).